We begin with the raw amino-acid sequence, 585 residues long: Archaeosine synthase (585 aa).

One can recognise a PUA domain in the interval 516–584 (TKTVEIDGFV…IGVEIRHVEE (69 aa)).

Belongs to the archaeosine synthase type 1 family. As to quaternary structure, homodimer.

The catalysed reaction is 7-cyano-7-carbaguanosine(15) in tRNA + L-glutamine + H2O = archaeosine(15) in tRNA + L-glutamate. The protein operates within tRNA modification; archaeosine-tRNA biosynthesis. In terms of biological role, is responsible for the final step in the biosynthesis of archaeosine, a modified nucleoside present in the dihydrouridine loop (D-loop) of archaeal tRNA. Catalyzes the conversion of 7-cyano-7-deazaguanine (preQ0)-modified tRNA to archaeosine-tRNA, transforming a nitrile group to a formamidine group. In Haloferax volcanii (strain ATCC 29605 / DSM 3757 / JCM 8879 / NBRC 14742 / NCIMB 2012 / VKM B-1768 / DS2) (Halobacterium volcanii), this protein is Archaeosine synthase.